Reading from the N-terminus, the 543-residue chain is Cyclohexanone 1,2-monooxygenase (543 aa).

6 residues coordinate FAD: Phe-16, Asp-37, Trp-46, Asp-57, Tyr-63, and Val-110.

Belongs to the FAD-binding monooxygenase family. FAD serves as cofactor.

It carries out the reaction cyclohexanone + NADPH + O2 + H(+) = hexano-6-lactone + NADP(+) + H2O. This is Cyclohexanone 1,2-monooxygenase from Acinetobacter sp.